The chain runs to 479 residues: Cardiolipin synthase A (479 aa).

2 consecutive transmembrane segments (helical) span residues 8–28 and 38–58; these read FFGY…LHAL and IAWA…YLIF. PLD phosphodiesterase domains lie at 218–245 and 392–419; these read VNFR…GDEY and QPGF…DNRS. Residues H223, K225, D230, H397, K399, and D404 contribute to the active site.

Belongs to the phospholipase D family. Cardiolipin synthase subfamily. ClsA sub-subfamily.

The protein localises to the cell inner membrane. It carries out the reaction 2 a 1,2-diacyl-sn-glycero-3-phospho-(1'-sn-glycerol) = a cardiolipin + glycerol. In terms of biological role, catalyzes the reversible phosphatidyl group transfer from one phosphatidylglycerol molecule to another to form cardiolipin (CL) (diphosphatidylglycerol) and glycerol. This chain is Cardiolipin synthase A, found in Pseudomonas putida (strain ATCC 700007 / DSM 6899 / JCM 31910 / BCRC 17059 / LMG 24140 / F1).